Consider the following 389-residue polypeptide: uncharacterized protein (389 aa).

The span at 1-12 (MVHATSQSASTE) shows a compositional bias: polar residues. Disordered stretches follow at residues 1–49 (MVHA…DEDL) and 86–111 (HKSMGSTRGKKKRGKTAKKAKKANRA). Acidic residues predominate over residues 40 to 49 (ESGDEYDEDL). The span at 93–110 (RGKKKRGKTAKKAKKANR) shows a compositional bias: basic residues.

This is an uncharacterized protein from Caenorhabditis elegans.